A 469-amino-acid chain; its full sequence is Zinc transporter SLC39A7 (469 aa).

The chain crosses the membrane as a helical span at residues 10-30; it reads WVAVGLLTWATLGLLVAELGG. Basic and acidic residues-rich tracts occupy residues 42 to 56 and 66 to 114; these read FHGHSHRHSHEDFHH and HTHE…EHSR. Residues 42–121 are disordered; that stretch reads FHGHSHRHSH…HSRGGYGESG (80 aa). H66 carries the pros-methylhistidine modification. 3 helical membrane-spanning segments follow: residues 138–158, 169–189, and 214–234; these read ALGATVLISAAPFFVLFLIPV, LQILLSFASGGLLGDAFLHLI, and GPILSVGLWVLSGIVAFLVVE. The segment covering 242–263 has biased composition (basic residues); the sequence is GGHGHSHGHGHAHSHTHGSHGH. The tract at residues 242–310 is disordered; sequence GGHGHSHGHG…VRPQNAEEEK (69 aa). The segment covering 264–285 has biased composition (basic and acidic residues); that stretch reads GRQECSTKEKQSSEEEEKETRG. 2 positions are modified to phosphoserine: S275 and S276. Helical transmembrane passes span 386-406, 410-430, and 448-468; these read LTAVGALAGTACALLTEGGAV, IAGGAGPGWVLPFTAGGFIYV, and SLLEVLGLLGGVVMMVLIAHL.

This sequence belongs to the ZIP transporter (TC 2.A.5) family. KE4/Catsup subfamily. Homodimer. Methylation at some His residue by METTL9 leads to reduced zinc-binding. Post-translationally, rapidly phosphorylated by CK2 following Zn(2+) treatment. This phosphorylation is required for efficient cytosolic Zn(2+) release.

The protein resides in the endoplasmic reticulum membrane. It is found in the golgi apparatus. Its subcellular location is the cis-Golgi network membrane. It catalyses the reaction Zn(2+)(in) = Zn(2+)(out). Its function is as follows. Transports Zn(2+) from the endoplasmic reticulum (ER)/Golgi apparatus to the cytosol, playing an essential role in the regulation of cytosolic zinc levels. Acts as a gatekeeper of zinc release from intracellular stores, requiring post-translational activation by phosphorylation, resulting in activation of multiple downstream pathways leading to cell growth and proliferation. Has an essential role in B cell development and is required for proper B cell receptor signaling. Plays an important role in maintaining intestinal epithelial homeostasis and skin dermis development by regulating ER function. Controls cell signaling pathways involved in glucose metabolism in skeletal muscle. Has a protective role against ER stress in different biological contexts. Mediates Zn(2+)-induced ferroptosis. The chain is Zinc transporter SLC39A7 from Pongo abelii (Sumatran orangutan).